Reading from the N-terminus, the 193-residue chain is uncharacterized protein (193 aa).

Disordered stretches follow at residues 1–67 (MSGP…GPRS) and 110–160 (QRTP…LPGS). Low complexity-rich tracts occupy residues 50-64 (GPQR…ARPG) and 148-160 (AGAS…LPGS).

This is an uncharacterized protein from Homo sapiens (Human).